The following is a 281-amino-acid chain: Nucleotide-binding protein TRQ2_1124 (281 aa).

9 to 16 (GLSGAGKT) contacts ATP. Residue 58 to 61 (DVRS) participates in GTP binding.

It belongs to the RapZ-like family.

Its function is as follows. Displays ATPase and GTPase activities. This is Nucleotide-binding protein TRQ2_1124 from Thermotoga sp. (strain RQ2).